Reading from the N-terminus, the 311-residue chain is 4-hydroxy-3-methylbut-2-enyl diphosphate reductase (311 aa).

C14 contacts [4Fe-4S] cluster. The (2E)-4-hydroxy-3-methylbut-2-enyl diphosphate site is built by H43 and H76. The dimethylallyl diphosphate site is built by H43 and H76. H43 and H76 together coordinate isopentenyl diphosphate. C98 is a [4Fe-4S] cluster binding site. H126 contributes to the (2E)-4-hydroxy-3-methylbut-2-enyl diphosphate binding site. Position 126 (H126) interacts with dimethylallyl diphosphate. H126 serves as a coordination point for isopentenyl diphosphate. E128 acts as the Proton donor in catalysis. Position 166 (T166) interacts with (2E)-4-hydroxy-3-methylbut-2-enyl diphosphate. C196 contacts [4Fe-4S] cluster. Residues S224, S225, N226, and S268 each coordinate (2E)-4-hydroxy-3-methylbut-2-enyl diphosphate. S224, S225, N226, and S268 together coordinate dimethylallyl diphosphate. Isopentenyl diphosphate contacts are provided by S224, S225, N226, and S268.

The protein belongs to the IspH family. The cofactor is [4Fe-4S] cluster.

The enzyme catalyses isopentenyl diphosphate + 2 oxidized [2Fe-2S]-[ferredoxin] + H2O = (2E)-4-hydroxy-3-methylbut-2-enyl diphosphate + 2 reduced [2Fe-2S]-[ferredoxin] + 2 H(+). It catalyses the reaction dimethylallyl diphosphate + 2 oxidized [2Fe-2S]-[ferredoxin] + H2O = (2E)-4-hydroxy-3-methylbut-2-enyl diphosphate + 2 reduced [2Fe-2S]-[ferredoxin] + 2 H(+). The protein operates within isoprenoid biosynthesis; dimethylallyl diphosphate biosynthesis; dimethylallyl diphosphate from (2E)-4-hydroxy-3-methylbutenyl diphosphate: step 1/1. It functions in the pathway isoprenoid biosynthesis; isopentenyl diphosphate biosynthesis via DXP pathway; isopentenyl diphosphate from 1-deoxy-D-xylulose 5-phosphate: step 6/6. Catalyzes the conversion of 1-hydroxy-2-methyl-2-(E)-butenyl 4-diphosphate (HMBPP) into a mixture of isopentenyl diphosphate (IPP) and dimethylallyl diphosphate (DMAPP). Acts in the terminal step of the DOXP/MEP pathway for isoprenoid precursor biosynthesis. The sequence is that of 4-hydroxy-3-methylbut-2-enyl diphosphate reductase from Chromobacterium violaceum (strain ATCC 12472 / DSM 30191 / JCM 1249 / CCUG 213 / NBRC 12614 / NCIMB 9131 / NCTC 9757 / MK).